The following is a 382-amino-acid chain: Protein NASP homolog 1 (382 aa).

The disordered stretch occupies residues 1–39 (MDTENIADASDIRVKDASGDSDEKGNGTTTEEETVEQKE). Residues 10 to 25 (SDIRVKDASGDSDEKG) show a composition bias toward basic and acidic residues. One copy of the TPR 1 repeat lies at 42-75 (LAELLAAGRRALKVNDIDKASDSLSEATELSSEI). Residues 103–112 (QLLKGPGEKE) show a composition bias toward basic and acidic residues. Residues 103–151 (QLLKGPGEKESGDEEQAGNSDDKTDEENGETEKEDGEESGEEEDDDDDT) form a disordered region. Over residues 125-150 (KTDEENGETEKEDGEESGEEEDDDDD) the composition is skewed to acidic residues. TPR repeat units lie at residues 191–224 (ADVL…QRNV) and 233–266 (AQTY…LIAR). A coiled-coil region spans residues 264–304 (IARQTELKHELERGVDDKEKKSEFENELKELEEMMPGVEEM). The disordered stretch occupies residues 337 to 382 (PQEAGDQKEANDISSLVRRPAKRAVDAPTDNQAVKKEKEEEGTTSI). Over residues 369–382 (AVKKEKEEEGTTSI) the composition is skewed to basic and acidic residues.

The protein belongs to the NASP family. May interact with zinc finger protein tra-4 and histone deacetylase hda-1.

It localises to the nucleus. Promotes normal hermaphrodite (XX) development, in concert with zinc finger protein tra-4 and histone deacetylase hda-1, perhaps as components of a complex. May act redundantly with nasp-2. Involved in innate immune response to B.thuringiensis strain DB27 and S.aureus bacteria. May play a role in the uptake or spreading of dsRNA. This is Protein NASP homolog 1 from Caenorhabditis elegans.